A 316-amino-acid chain; its full sequence is Ribosomal RNA small subunit methyltransferase H (316 aa).

S-adenosyl-L-methionine is bound by residues 35 to 37 (AGH), D55, F84, D105, and Q112.

The protein belongs to the methyltransferase superfamily. RsmH family.

The protein localises to the cytoplasm. It catalyses the reaction cytidine(1402) in 16S rRNA + S-adenosyl-L-methionine = N(4)-methylcytidine(1402) in 16S rRNA + S-adenosyl-L-homocysteine + H(+). Its function is as follows. Specifically methylates the N4 position of cytidine in position 1402 (C1402) of 16S rRNA. This Streptococcus pneumoniae (strain JJA) protein is Ribosomal RNA small subunit methyltransferase H.